A 365-amino-acid polypeptide reads, in one-letter code: Chorismate synthase (365 aa).

NADP(+)-binding residues include R48 and R54. Residues 125–127 (RSS), 237–238 (NA), G277, 292–296 (KPTSS), and R318 contribute to the FMN site.

Belongs to the chorismate synthase family. In terms of assembly, homotetramer. FMNH2 serves as cofactor.

The enzyme catalyses 5-O-(1-carboxyvinyl)-3-phosphoshikimate = chorismate + phosphate. Its pathway is metabolic intermediate biosynthesis; chorismate biosynthesis; chorismate from D-erythrose 4-phosphate and phosphoenolpyruvate: step 7/7. Catalyzes the anti-1,4-elimination of the C-3 phosphate and the C-6 proR hydrogen from 5-enolpyruvylshikimate-3-phosphate (EPSP) to yield chorismate, which is the branch point compound that serves as the starting substrate for the three terminal pathways of aromatic amino acid biosynthesis. This reaction introduces a second double bond into the aromatic ring system. The protein is Chorismate synthase of Polaromonas naphthalenivorans (strain CJ2).